A 490-amino-acid polypeptide reads, in one-letter code: Transmembrane protease serine 2 (490 aa).

The Cytoplasmic portion of the chain corresponds to 1-83 (MALNSGSPPG…ALCTSKSKKS (83 aa)). Residues 84-104 (LCLALALGTVLTGAAVAAVLL) traverse the membrane as a helical; Signal-anchor for type II membrane protein segment. Topologically, residues 105 to 490 (WRFWDSNCST…WIYQQMRANS (386 aa)) are extracellular. Asparagine 111 is a glycosylation site (N-linked (GlcNAc...) asparagine). In terms of domain architecture, LDL-receptor class A spans 111-149 (NCSTSEMECGSSGTCISSSLWCDGVAHCPNGEDENRCVR). Cystine bridges form between cysteine 112/cysteine 125, cysteine 119/cysteine 138, cysteine 132/cysteine 147, cysteine 171/cysteine 230, cysteine 184/cysteine 240, cysteine 243/cysteine 363, cysteine 279/cysteine 295, cysteine 408/cysteine 424, and cysteine 435/cysteine 463. Ca(2+) contacts are provided by aspartate 133, valine 135, aspartate 143, and glutamate 144. Positions 150 to 242 (LYGQSFILQV…RMVVSLRCIE (93 aa)) constitute an SRCR domain. Asparagine 212 carries an N-linked (GlcNAc...) asparagine glycan. The Peptidase S1 domain occupies 254–487 (IVGGLNASPG…FTDWIYQQMR (234 aa)). Catalysis depends on charge relay system residues histidine 294 and aspartate 343. Serine 439 functions as the Charge relay system in the catalytic mechanism. N-linked (GlcNAc...) asparagine glycosylation is present at asparagine 474.

The protein belongs to the peptidase S1 family. As to quaternary structure, the catalytically active form interacts with ACE2. Proteolytically processed; by an autocatalytic mechanism. Autocleavage induces active conformation. As to expression, larynx, trachea and bronchi, lung, prostate and kidney.

The protein resides in the cell membrane. The protein localises to the secreted. The enzyme catalyses The enzyme cleaves angiotensin-converting enzyme 2 (EC 3.4.17.23) and cleaves influenzea A and B virus and coronavirus spike glycoproteins at arginine residues.. Its function is as follows. Plasma membrane-anchored serine protease that cleaves at arginine residues. Participates in proteolytic cascades of relevance for the normal physiologic function of the prostate. Androgen-induced TMPRSS2 activates several substrates that include pro-hepatocyte growth factor/HGF, the protease activated receptor-2/F2RL1 or matriptase/ST14 leading to extracellular matrix disruption. In addition, activates trigeminal neurons and contribute to both spontaneous pain and mechanical allodynia. Functionally, (Microbial infection) Essential for spread and pathogenesis of influenza A virus (strains H1N1, H3N2 and H7N9) and is involved in proteolytic cleavage and activation of hemagglutinin (HA) protein which is essential for viral infectivity. The sequence is that of Transmembrane protease serine 2 (Tmprss2) from Mus musculus (Mouse).